An 872-amino-acid chain; its full sequence is Probably inactive leucine-rich repeat receptor-like protein kinase At5g06940 (872 aa).

An N-terminal signal peptide occupies residues 1-26 (MATRFKHQFSISLALTFFFFFTKTFS). The Extracellular segment spans residues 27–540 (FTENEELGNL…RSNFHKKGGK (514 aa)). Asn-55, Asn-63, and Asn-86 each carry an N-linked (GlcNAc...) asparagine glycan. LRR repeat units follow at residues 79–98 (SINL…ICDL), 99–122 (PYLT…LSRC), 123–146 (VTLE…ISEF), 147–169 (SSLK…DLGL), 171–193 (FNLQ…AIGK), 195–217 (SELV…SFLG), 219–243 (LDKL…FVGL), 244–267 (TSLR…LGPS), 269–292 (KNLV…ICSG), 294–316 (RLIN…IGEC), 317–340 (LSLE…LWKL), 341–365 (PRIK…SLAS), 367–389 (LEQV…GLVK), 391–412 (LYKF…FCDS), 413–435 (PVLS…LKNC), 436–459 (KKLV…LADL), 460–482 (HVLT…GLQN), and 484–506 (KLAL…LVSG). Asn-129 carries N-linked (GlcNAc...) asparagine glycosylation. Asn-255 carries an N-linked (GlcNAc...) asparagine glycan. A glycan (N-linked (GlcNAc...) asparagine) is linked at Asn-297. The N-linked (GlcNAc...) asparagine glycan is linked to Asn-374. A glycan (N-linked (GlcNAc...) asparagine) is linked at Asn-419. The N-linked (GlcNAc...) asparagine glycan is linked to Asn-489. Residues 541 to 561 (ALVLSLICLALAIATFLAVLY) form a helical membrane-spanning segment. Residues 562 to 872 (RYSRKKVQFK…ISSSVSPVSA (311 aa)) are Cytoplasmic-facing. The residue at position 585 (Thr-585) is a Phosphothreonine. The 275-residue stretch at 589 to 863 (LMKVVNESCP…VKVIKLLEGI (275 aa)) folds into the Protein kinase domain. ATP is bound by residues 595–603 (ESCPSGSEV) and Lys-617. Phosphotyrosine is present on residues Tyr-662, Tyr-699, Tyr-754, and Tyr-761.

The protein belongs to the protein kinase superfamily. Ser/Thr protein kinase family.

It is found in the membrane. This chain is Probably inactive leucine-rich repeat receptor-like protein kinase At5g06940, found in Arabidopsis thaliana (Mouse-ear cress).